The chain runs to 117 residues: Immunity protein BC_0921 (117 aa).

Probably interacts with cognate toxin BC_0920 but not with other non-cognate toxins. The interaction inhibits the toxic activity of BC_0920.

It localises to the cytoplasm. Functionally, immunity component of an LXG toxin-immunity module. Neutralizes the RNase activity of cognate toxin BC_0920. Probably does not have immunity protein activity on other toxins with the LXG domain. The chain is Immunity protein BC_0921 from Bacillus cereus (strain ATCC 14579 / DSM 31 / CCUG 7414 / JCM 2152 / NBRC 15305 / NCIMB 9373 / NCTC 2599 / NRRL B-3711).